We begin with the raw amino-acid sequence, 555 residues long: Probable Xaa-Pro aminopeptidase BC1G_13431 (555 aa).

Residues D303, D314, E458, and E499 each coordinate Mn(2+). The disordered stretch occupies residues 527-555 (EGKEQEEEEEREANRKATESRKQKKTWFW). Positions 538-547 (EANRKATESR) are enriched in basic and acidic residues.

Belongs to the peptidase M24B family. Requires Mn(2+) as cofactor.

The catalysed reaction is Release of any N-terminal amino acid, including proline, that is linked to proline, even from a dipeptide or tripeptide.. Its function is as follows. Catalyzes the removal of a penultimate prolyl residue from the N-termini of peptides. In Botryotinia fuckeliana (strain B05.10) (Noble rot fungus), this protein is Probable Xaa-Pro aminopeptidase BC1G_13431.